Consider the following 101-residue polypeptide: Movement protein (101 aa).

Residues Glu30–Leu50 form a helical membrane-spanning segment. Positions Arg78 to Gly101 are disordered. Positions Pro90–Gly101 are enriched in pro residues.

Belongs to the mastrevirus movement protein family. In terms of assembly, interacts with the capsid protein (CP). Part of a MP-CP-viral DNA complex.

Its subcellular location is the host membrane. Functionally, involved in the viral transport within, and between cells. This chain is Movement protein, found in Maize streak virus genotype E (isolate Pat) (MSV).